A 122-amino-acid chain; its full sequence is Large ribosomal subunit protein uL14 (122 aa).

It belongs to the universal ribosomal protein uL14 family. Part of the 50S ribosomal subunit. Forms a cluster with proteins L3 and L19. In the 70S ribosome, L14 and L19 interact and together make contacts with the 16S rRNA in bridges B5 and B8.

Its function is as follows. Binds to 23S rRNA. Forms part of two intersubunit bridges in the 70S ribosome. The polypeptide is Large ribosomal subunit protein uL14 (Clostridium kluyveri (strain ATCC 8527 / DSM 555 / NBRC 12016 / NCIMB 10680 / K1)).